Reading from the N-terminus, the 157-residue chain is MFFSGLFQRKSDAPVTTPAELADAIGLSYDTYTGKQISSQRAMRLTAVFSCVRVLAESVGMLPCNLYHLNGSLKQRATGERLHKLISTHPNGYMTPQEFWELVVTCLCLRGNFYAYKVKAFGEVAELLPVDPGCVVYALGRCQRWPEGDRRECYSAR.

It belongs to the phage portal family.

The chain is Protein BeeE (beeE) from Escherichia coli (strain K12).